We begin with the raw amino-acid sequence, 78 residues long: Large ribosomal subunit protein bL31 (78 aa).

Belongs to the bacterial ribosomal protein bL31 family. Type A subfamily. In terms of assembly, part of the 50S ribosomal subunit.

Its function is as follows. Binds the 23S rRNA. This chain is Large ribosomal subunit protein bL31 (rpmE), found in Rickettsia typhi (strain ATCC VR-144 / Wilmington).